We begin with the raw amino-acid sequence, 179 residues long: Large ribosomal subunit protein uL5 (179 aa).

This sequence belongs to the universal ribosomal protein uL5 family. As to quaternary structure, part of the 50S ribosomal subunit; part of the 5S rRNA/L5/L18/L25 subcomplex. Contacts the 5S rRNA and the P site tRNA. Forms a bridge to the 30S subunit in the 70S ribosome.

Functionally, this is one of the proteins that bind and probably mediate the attachment of the 5S RNA into the large ribosomal subunit, where it forms part of the central protuberance. In the 70S ribosome it contacts protein S13 of the 30S subunit (bridge B1b), connecting the 2 subunits; this bridge is implicated in subunit movement. Contacts the P site tRNA; the 5S rRNA and some of its associated proteins might help stabilize positioning of ribosome-bound tRNAs. The sequence is that of Large ribosomal subunit protein uL5 from Rhodospirillum rubrum (strain ATCC 11170 / ATH 1.1.1 / DSM 467 / LMG 4362 / NCIMB 8255 / S1).